Consider the following 168-residue polypeptide: Small ribosomal subunit protein bS16 (168 aa).

The disordered stretch occupies residues 110 to 168 (LSEANNGPTAEAITEKKKKAREEKEAKEAAEKAAAEKAAAAEAEASEEAPAEEAASEEA). The span at 129-144 (AREEKEAKEAAEKAAA) shows a compositional bias: basic and acidic residues. Residues 153–168 (EASEEAPAEEAASEEA) show a composition bias toward acidic residues.

It belongs to the bacterial ribosomal protein bS16 family.

This Corynebacterium efficiens (strain DSM 44549 / YS-314 / AJ 12310 / JCM 11189 / NBRC 100395) protein is Small ribosomal subunit protein bS16.